A 554-amino-acid chain; its full sequence is Glutamine--tRNA ligase (554 aa).

Residues 33–43 carry the 'HIGH' region motif; that stretch reads PEPNGYLHIGH. Residues 34-36 and 40-46 contribute to the ATP site; these read EPN and HIGHAKS. L-glutamine is bound by residues Asp-66 and Tyr-210. Residues Thr-229, 259-260, and 267-269 contribute to the ATP site; these read RL and MSK. The short motif at 266-270 is the 'KMSKS' region element; that stretch reads VMSKR.

This sequence belongs to the class-I aminoacyl-tRNA synthetase family. In terms of assembly, monomer.

It is found in the cytoplasm. It carries out the reaction tRNA(Gln) + L-glutamine + ATP = L-glutaminyl-tRNA(Gln) + AMP + diphosphate. The chain is Glutamine--tRNA ligase from Clostridioides difficile (strain 630) (Peptoclostridium difficile).